A 460-amino-acid polypeptide reads, in one-letter code: 3-isopropylmalate dehydratase large subunit (460 aa).

Positions 338, 398, and 401 each coordinate [4Fe-4S] cluster.

This sequence belongs to the aconitase/IPM isomerase family. LeuC type 1 subfamily. As to quaternary structure, heterodimer of LeuC and LeuD. [4Fe-4S] cluster serves as cofactor.

The enzyme catalyses (2R,3S)-3-isopropylmalate = (2S)-2-isopropylmalate. It participates in amino-acid biosynthesis; L-leucine biosynthesis; L-leucine from 3-methyl-2-oxobutanoate: step 2/4. Its function is as follows. Catalyzes the isomerization between 2-isopropylmalate and 3-isopropylmalate, via the formation of 2-isopropylmaleate. In Streptococcus thermophilus (strain CNRZ 1066), this protein is 3-isopropylmalate dehydratase large subunit.